The following is a 155-amino-acid chain: Small ribosomal subunit protein uS7c (155 aa).

It belongs to the universal ribosomal protein uS7 family. As to quaternary structure, part of the 30S ribosomal subunit.

It is found in the plastid. It localises to the chloroplast. Functionally, one of the primary rRNA binding proteins, it binds directly to 16S rRNA where it nucleates assembly of the head domain of the 30S subunit. This is Small ribosomal subunit protein uS7c (rps7) from Physcomitrium patens (Spreading-leaved earth moss).